The following is a 339-amino-acid chain: Dihydroorotase (339 aa).

Zn(2+)-binding residues include His-12 and His-14. Residues 14 to 16 (HVR) and Asn-40 each bind substrate. Zn(2+)-binding residues include Lys-94, His-133, His-167, and Asp-239. Lys-94 is modified (N6-carboxylysine). His-133 serves as a coordination point for substrate. Residue Asp-239 is part of the active site. 2 residues coordinate substrate: His-243 and Ala-255.

Belongs to the metallo-dependent hydrolases superfamily. DHOase family. Class II DHOase subfamily. As to quaternary structure, homodimer. Requires Zn(2+) as cofactor.

The enzyme catalyses (S)-dihydroorotate + H2O = N-carbamoyl-L-aspartate + H(+). It participates in pyrimidine metabolism; UMP biosynthesis via de novo pathway; (S)-dihydroorotate from bicarbonate: step 3/3. Catalyzes the reversible cyclization of carbamoyl aspartate to dihydroorotate. The polypeptide is Dihydroorotase (Helicobacter pylori (strain G27)).